The primary structure comprises 692 residues: DNA ligase (692 aa).

Residues Asp-35–Asp-39, Ser-88–Leu-89, and Glu-117 contribute to the NAD(+) site. The active-site N6-AMP-lysine intermediate is the Lys-119. 4 residues coordinate NAD(+): Arg-140, Glu-176, Lys-301, and Lys-325. Positions 416, 419, 434, and 439 each coordinate Zn(2+). The region spanning Leu-611–Thr-692 is the BRCT domain.

This sequence belongs to the NAD-dependent DNA ligase family. LigA subfamily. Requires Mg(2+) as cofactor. The cofactor is Mn(2+).

It catalyses the reaction NAD(+) + (deoxyribonucleotide)n-3'-hydroxyl + 5'-phospho-(deoxyribonucleotide)m = (deoxyribonucleotide)n+m + AMP + beta-nicotinamide D-nucleotide.. Functionally, DNA ligase that catalyzes the formation of phosphodiester linkages between 5'-phosphoryl and 3'-hydroxyl groups in double-stranded DNA using NAD as a coenzyme and as the energy source for the reaction. It is essential for DNA replication and repair of damaged DNA. In Mesomycoplasma hyopneumoniae (strain 7448) (Mycoplasma hyopneumoniae), this protein is DNA ligase.